A 286-amino-acid chain; its full sequence is Polyamine aminopropyltransferase (286 aa).

The PABS domain maps to 5–238; sequence TMWHETLHDQ…GIMTFAWATD (234 aa). Residue Gln33 coordinates S-methyl-5'-thioadenosine. The spermidine site is built by His64 and Asp88. S-methyl-5'-thioadenosine contacts are provided by residues Glu108 and 140–141; that span reads DG. Asp158 serves as the catalytic Proton acceptor. Residue 158 to 161 participates in spermidine binding; that stretch reads DCTD. Residue Pro165 participates in S-methyl-5'-thioadenosine binding.

It belongs to the spermidine/spermine synthase family. As to quaternary structure, homodimer or homotetramer.

The protein localises to the cytoplasm. It catalyses the reaction S-adenosyl 3-(methylsulfanyl)propylamine + putrescine = S-methyl-5'-thioadenosine + spermidine + H(+). It functions in the pathway amine and polyamine biosynthesis; spermidine biosynthesis; spermidine from putrescine: step 1/1. Catalyzes the irreversible transfer of a propylamine group from the amino donor S-adenosylmethioninamine (decarboxy-AdoMet) to putrescine (1,4-diaminobutane) to yield spermidine. The sequence is that of Polyamine aminopropyltransferase from Salmonella typhi.